Consider the following 102-residue polypeptide: FMRFamide-like neuropeptides 9 (102 aa).

Positions 1–19 (MNQFYALFLVACIAAMANA) are cleaved as a signal peptide. Positions 20–63 (YEEPDLDALAEFCGKESNRKYCDQIAQLATQHAIGINQEQVRME) are excised as a propeptide. Position 72 is a phenylalanine amide (Phe-72). A propeptide spanning residues 75 to 90 (RSGYPLVIDDEEMRMD) is cleaved from the precursor. Position 99 is a phenylalanine amide (Phe-99).

It belongs to the FARP (FMRFamide related peptide) family. As to expression, each flp gene is expressed in a distinct set of neurons.

The protein localises to the secreted. In terms of biological role, FMRFamides and FMRFamide-like peptides are neuropeptides. Functionally, KPSFVRF-amide: Has no effect on somatic body wall muscle, inhibits contraction of vaginal vera muscle, and inhibits the activity of the dissected pharyngeal myogenic muscle system. Acts as a ligand for the npr-22 receptor in vitro. This chain is FMRFamide-like neuropeptides 9, found in Caenorhabditis elegans.